The following is a 502-amino-acid chain: Phenylacetaldehyde dehydrogenase (502 aa).

251 to 256 (GSTEVG) lines the NAD(+) pocket. Residues E273 and C307 contribute to the active site.

It belongs to the aldehyde dehydrogenase family.

It catalyses the reaction 2-phenylacetaldehyde + NAD(+) + H2O = 2-phenylacetate + NADH + 2 H(+). Its pathway is aromatic compound metabolism. Phenylacetaldehyde dehydrogenase that catalyzes the last step in the aerobic styrene degradation pathway by mediating oxidation of phenylacetaldehyde to phenylacetic acid. The chain is Phenylacetaldehyde dehydrogenase (styD) from Pseudomonas fluorescens.